The primary structure comprises 176 residues: MKFLFDLFPIILFFAAFKVWGIFTATAVAIVATLAQVAWVAFRHRKVDTMLWVSLGVIVVFGGATLVLHDEKFIQWKPTVLYWLFAIGLLAARYAFGNNLIEKMMGKQLTLPHPVWDKLNVAWALFFAVLGLANLYVVHNFTESQWVNFKLFGTTGAMVVFIILQSLWLTKYLKDE.

6 helical membrane passes run 3-23 (FLFD…WGIF), 24-44 (TATA…AFRH), 49-69 (TMLW…LVLH), 81-101 (LYWL…NNLI), 121-141 (VAWA…VHNF), and 149-169 (FKLF…SLWL).

It belongs to the YciB family.

It is found in the cell inner membrane. In terms of biological role, plays a role in cell envelope biogenesis, maintenance of cell envelope integrity and membrane homeostasis. The chain is Inner membrane-spanning protein YciB from Burkholderia vietnamiensis (strain G4 / LMG 22486) (Burkholderia cepacia (strain R1808)).